We begin with the raw amino-acid sequence, 473 residues long: Vasculin (473 aa).

Disordered stretches follow at residues 1-25 (MAQH…SSLN), 44-170 (RRRH…SRTP), and 186-341 (SGFP…HQER). The residue at position 49 (serine 49) is a Phosphoserine. Residue arginine 87 is modified to Omega-N-methylarginine. Positions 94-117 (NSRSRSSIFHSGKSQGLHENSIPD) are enriched in polar residues. Positions 119–133 (ETGRKEDKRERRQFE) are enriched in basic and acidic residues. 2 stretches are compositionally biased toward polar residues: residues 193–204 (NLQSQPVKNGTG) and 248–286 (NFNT…QQPR). A phosphoserine mark is found at serine 274, serine 276, serine 322, and serine 381. Positions 293 to 329 (MRSDKKSEFLKALKRDRVEEEHEDESHAGSEKDDDSF) are enriched in basic and acidic residues. Residues 450-473 (TFKPTIENDDTETSSSDTSDDDDV) form a disordered region. Residues 456-473 (ENDDTETSSSDTSDDDDV) show a composition bias toward acidic residues.

Belongs to the vasculin family. In terms of assembly, interacts with GTF2B, GTF2F2, RNA polymerase II and TBP. In terms of tissue distribution, ubiquitously expressed (at protein level).

It is found in the nucleus. Functionally, functions as a GC-rich promoter-specific transactivating transcription factor. The sequence is that of Vasculin (Gpbp1) from Mus musculus (Mouse).